The chain runs to 152 residues: Small ribosomal subunit protein uS15 (152 aa).

The span at 1-11 shows a compositional bias: basic residues; the sequence is MAKMHTKRKGK. The disordered stretch occupies residues 1-22; the sequence is MAKMHTKRKGKSSSTRPIRTEP.

The protein belongs to the universal ribosomal protein uS15 family. As to quaternary structure, part of the 30S ribosomal subunit.

In Methanosarcina barkeri (strain Fusaro / DSM 804), this protein is Small ribosomal subunit protein uS15.